The primary structure comprises 214 residues: Large ribosomal subunit protein uL3 (214 aa).

Residues 119–159 (GVKRHGFAGGPKTHGQSDRHRAPGSIGPTTDPGRVHKGKRM) are disordered.

Belongs to the universal ribosomal protein uL3 family. In terms of assembly, part of the 50S ribosomal subunit. Forms a cluster with proteins L14 and L19.

In terms of biological role, one of the primary rRNA binding proteins, it binds directly near the 3'-end of the 23S rRNA, where it nucleates assembly of the 50S subunit. The protein is Large ribosomal subunit protein uL3 of Thermomicrobium roseum (strain ATCC 27502 / DSM 5159 / P-2).